The primary structure comprises 930 residues: GPI ethanolamine phosphate transferase 1 (930 aa).

The Cytoplasmic segment spans residues 1–8 (MARLGRTG). The chain crosses the membrane as a helical span at residues 9–29 (FLTLAVVFHLIYAYSIFDIYF). The Lumenal segment spans residues 30–466 (VSPIVSGMRP…LQTYDWLFLR (437 aa)). Asn148 carries N-linked (GlcNAc...) asparagine glycosylation. The helical transmembrane segment at 467–487 (TIVTFGYVGWIAYALTTVIHL) threads the bilayer. At 488–498 (HVLHGASESDR) the chain is on the cytoplasmic side. Residues 499–519 (TTASISFFSSVLVALFSVFLY) traverse the membrane as a helical segment. The Lumenal portion of the chain corresponds to 520 to 521 (QG). Residues 522–542 (SPWRYYLYGFFPIFFWEEVFA) form a helical membrane-spanning segment. At 543 to 569 (RRKAFHAGRAGALLLPKRDLHSNKVED) the chain is on the cytoplasmic side. Residues 570-590 (IDTITYGGAFMLLTGLLYLLF) traverse the membrane as a helical segment. At 591-611 (EDEILGTSHQPAAVSRKGSRN) the chain is on the lumenal side. A helical transmembrane segment spans residues 612-632 (IMGLQLGMVLLALIVTRSSAA). Over 633-639 (SLQAKQG) the chain is Cytoplasmic. The helical transmembrane segment at 640-660 (LPFGNQVVGWGVLIASLLLPF) threads the bilayer. Residues 661–684 (AHRLYPNSHYLHRLMIIFLTFSPT) lie on the Lumenal side of the membrane. A helical transmembrane segment spans residues 685–705 (FIILTISYEGLFYFAFCMTLV). Topologically, residues 706 to 761 (TWVRLEHATYVYTAKPVAKQAQETIEPPKKANPGATTVVDGETYRFRTLTVSDARV) are cytoplasmic. The chain crosses the membrane as a helical span at residues 762-782 (ALFFFFLLQSAFFSTGNIASI). Residues 783–803 (SSFSLDSVYRLIPVFNPFSQG) lie on the Lumenal side of the membrane. Residues 804 to 824 (ALLILKLLIPFAIISANLGIL) traverse the membrane as a helical segment. Residues 825–833 (NRRLEVAPS) lie on the Cytoplasmic side of the membrane. A helical transmembrane segment spans residues 834–854 (ALFMVVMAISDVMTLNFFYMV). Over 855–870 (RDEGSWLDIGTTISHF) the chain is Lumenal. The chain crosses the membrane as a helical span at residues 871–891 (CIASFLCTFVAGLEFLSEVFI). Residues 892 to 930 (SGVDFGLRTDAITASVPDIVNGITSKGQKDVPNGVEDKE) lie on the Cytoplasmic side of the membrane.

It belongs to the PIGG/PIGN/PIGO family. PIGN subfamily.

It is found in the endoplasmic reticulum membrane. Its pathway is glycolipid biosynthesis; glycosylphosphatidylinositol-anchor biosynthesis. Its function is as follows. Ethanolamine phosphate transferase involved in glycosylphosphatidylinositol-anchor biosynthesis. Transfers ethanolamine phosphate to the first alpha-1,4-linked mannose of the glycosylphosphatidylinositol precursor of GPI-anchor. The polypeptide is GPI ethanolamine phosphate transferase 1 (mcd4) (Emericella nidulans (strain FGSC A4 / ATCC 38163 / CBS 112.46 / NRRL 194 / M139) (Aspergillus nidulans)).